Here is a 614-residue protein sequence, read N- to C-terminus: MAPAAVAAAEAGSKAAAVAGKAVAACERDAEKLEFIEEMTRGFDAVQERVLAAILARNNGAEYLRRHGMEGRTDREAFKARVPVVTYEDLRPEIERIANGDRSNIISSHPITEFLTSSGTSAGERKLMPTIEDELDRRQMLYSLLMPVMNLYVPGLDKGKGLYFLFIKSETKTPGGLPARPVLTSYYKSDHFKHRPFDPYNVYTSPTAAILCTDAFQSMYAQMLCGLVARAEVLRVGAVFASGLLRAIRFLQLHWRELAHDIRTGTLSAKVTEPSIRDAVAEVLAAPDAELAAFVEAECGKDKWEGIITRMWPNTKYLDVIVTGAMAQYIPTLKFYSGGLPMACTMYASSECYFGLNLRPMCDPSEVSYTIMPNMGYFELMPHDPDAPPLPRDAPPPRLVDLADAEVGREYELVITTYAGLCRYRVGDILQVTGFHNAAPQFRFVRRKNVLLSIDSDKTDEAELQAAVERASALLSPYGASIVEYTSQADATTIPGHYVVYWELMVREGGAWPPPAEEEGRGVFERCCLEMEEALNAVYRQGRNGEAIGPLEIRVVRAGTFEEVMDYAISRGASINQYKAPRCVSFGPIIELLNSRVISKHFSPACPKYSPHKK.

The protein belongs to the IAA-amido conjugating enzyme family. In terms of tissue distribution, expressed in roots, flowers and callus.

May catalyze the synthesis of indole-3-acetic acid (IAA)-amino acid conjugates, providing a mechanism for the plant to cope with the presence of excess auxin. The chain is Probable indole-3-acetic acid-amido synthetase GH3.2 (GH3.2) from Oryza sativa subsp. japonica (Rice).